Reading from the N-terminus, the 323-residue chain is Dehydrogenase/reductase SDR family member 7B (323 aa).

Topologically, residues 1 to 4 (MDLT) are cytoplasmic. A helical; Signal-anchor for type II membrane protein membrane pass occupies residues 5 to 25 (SWAIFPLLLASIGVYGLYKLL). At 26–272 (QKLRSGAYLQ…AVGERRKELL (247 aa)) the chain is on the lumenal side. Residues Ser-46 and Leu-48 each contribute to the NAD(+) site. Position 178 (Ser-178) interacts with substrate. Residues Tyr-191, Lys-195, and Thr-226 each coordinate NAD(+). Tyr-191 serves as the catalytic Proton acceptor.

The protein belongs to the short-chain dehydrogenases/reductases (SDR) family.

The protein resides in the endoplasmic reticulum membrane. Functionally, putative oxidoreductase. The protein is Dehydrogenase/reductase SDR family member 7B (dhrs7b) of Xenopus laevis (African clawed frog).